The primary structure comprises 508 residues: UDP-N-acetylmuramoyl-L-alanyl-D-glutamate--2,6-diaminopimelate ligase (508 aa).

Serine 43 is a UDP-N-acetyl-alpha-D-muramoyl-L-alanyl-D-glutamate binding site. 124 to 130 (GTNGKTT) provides a ligand contact to ATP. UDP-N-acetyl-alpha-D-muramoyl-L-alanyl-D-glutamate-binding positions include 166 to 167 (TT), serine 193, and arginine 201. Lysine 233 bears the N6-carboxylysine mark. Meso-2,6-diaminopimelate is bound by residues arginine 404, 428–431 (DNPR), glycine 478, and glutamate 482. Positions 428–431 (DNPR) match the Meso-diaminopimelate recognition motif motif.

Belongs to the MurCDEF family. MurE subfamily. Mg(2+) is required as a cofactor. Carboxylation is probably crucial for Mg(2+) binding and, consequently, for the gamma-phosphate positioning of ATP.

It is found in the cytoplasm. The catalysed reaction is UDP-N-acetyl-alpha-D-muramoyl-L-alanyl-D-glutamate + meso-2,6-diaminopimelate + ATP = UDP-N-acetyl-alpha-D-muramoyl-L-alanyl-gamma-D-glutamyl-meso-2,6-diaminopimelate + ADP + phosphate + H(+). It functions in the pathway cell wall biogenesis; peptidoglycan biosynthesis. In terms of biological role, catalyzes the addition of meso-diaminopimelic acid to the nucleotide precursor UDP-N-acetylmuramoyl-L-alanyl-D-glutamate (UMAG) in the biosynthesis of bacterial cell-wall peptidoglycan. The protein is UDP-N-acetylmuramoyl-L-alanyl-D-glutamate--2,6-diaminopimelate ligase of Chlorobaculum tepidum (strain ATCC 49652 / DSM 12025 / NBRC 103806 / TLS) (Chlorobium tepidum).